A 197-amino-acid polypeptide reads, in one-letter code: MENKNHQQENFKSTYQSLVNSARILFVEKGYQAVSIDEISGKALVTKGAFYHHFKNKKQLLSACYKQQLIMIDAYITTKTDLTNGWSALESIFEHYLDYIIDNNKNLIPIQEVMPIIGWNELEKISLEYITGKVNAIVSKLIQENQLKAYDSDVLKNLLNGWFMHIAIHAKNLKELADKKGQFIAIYRGFLLSLKDK.

The 61-residue stretch at 12–72 (KSTYQSLVNS…ACYKQQLIMI (61 aa)) folds into the HTH tetR-type domain. The segment at residues 35–54 (SIDEISGKALVTKGAFYHHF) is a DNA-binding region (H-T-H motif).

This Escherichia coli protein is Transposon Tn10 TetC protein (tetC).